The chain runs to 1018 residues: D-2-hydroxyglutarate dehydrogenase (1018 aa).

The FAD-binding PCMH-type domain occupies 48–281 (YQLLPDAVVF…TEARLDITRL (234 aa)). (R)-2-hydroxyglutarate is bound by residues R402 and H500. The region spanning 662 to 695 (FSHEVKEAMSGCLACKACSTQCPIKIDVPEFRSR) is the 4Fe-4S ferredoxin-type domain. The [4Fe-4S] cluster site is built by C673, C676, C679, and C683.

It in the N-terminal section; belongs to the FAD-binding oxidoreductase/transferase type 4 family. Homotetramer. It depends on [4Fe-4S] cluster as a cofactor. FAD is required as a cofactor.

It catalyses the reaction (R)-2-hydroxyglutarate + A = 2-oxoglutarate + AH2. With respect to regulation, activity is completely inhibited by the addition of 0.5 mM Mn(2+), Ni(2+), or Co(2+) and partially inhibited by 0.5 mM Zn(2+). In terms of biological role, catalyzes the oxidation of D-2-hydroxyglutarate (D-2-HGA) to 2-oxoglutarate. Appears to be the only D2HGDH in E.coli, providing the way to recycle D-2-HGA produced during L-serine synthesis by SerA, by converting it back to 2-oxoglutarate. The physiological molecule that functions as the primary electron acceptor during D-2-HGA oxidation by YdiJ in E.coli is unknown. Shows strict substrate specificity towards D-2-HGA, since it has no detectable activity on L-2-hydroxyglutarate, L-malate, D-malate, L-lactate, D-lactate, L-tartrate, D-tartrate, L-glycerate, D-glycerate, glutarate, or pyruvate. The protein is D-2-hydroxyglutarate dehydrogenase (ydiJ) of Escherichia coli (strain K12).